Reading from the N-terminus, the 293-residue chain is 4-hydroxy-tetrahydrodipicolinate synthase (293 aa).

Thr45 serves as a coordination point for pyruvate. Tyr133 (proton donor/acceptor) is an active-site residue. Residue Lys161 is the Schiff-base intermediate with substrate of the active site. Val203 is a binding site for pyruvate.

It belongs to the DapA family. Homotetramer; dimer of dimers.

The protein localises to the cytoplasm. It carries out the reaction L-aspartate 4-semialdehyde + pyruvate = (2S,4S)-4-hydroxy-2,3,4,5-tetrahydrodipicolinate + H2O + H(+). Its pathway is amino-acid biosynthesis; L-lysine biosynthesis via DAP pathway; (S)-tetrahydrodipicolinate from L-aspartate: step 3/4. Catalyzes the condensation of (S)-aspartate-beta-semialdehyde [(S)-ASA] and pyruvate to 4-hydroxy-tetrahydrodipicolinate (HTPA). This chain is 4-hydroxy-tetrahydrodipicolinate synthase, found in Exiguobacterium sp. (strain ATCC BAA-1283 / AT1b).